Reading from the N-terminus, the 241-residue chain is 1-(5-phosphoribosyl)-5-[(5-phosphoribosylamino)methylideneamino] imidazole-4-carboxamide isomerase (241 aa).

Residue aspartate 10 is the Proton acceptor of the active site. Catalysis depends on aspartate 131, which acts as the Proton donor.

Belongs to the HisA/HisF family.

Its subcellular location is the cytoplasm. The enzyme catalyses 1-(5-phospho-beta-D-ribosyl)-5-[(5-phospho-beta-D-ribosylamino)methylideneamino]imidazole-4-carboxamide = 5-[(5-phospho-1-deoxy-D-ribulos-1-ylimino)methylamino]-1-(5-phospho-beta-D-ribosyl)imidazole-4-carboxamide. The protein operates within amino-acid biosynthesis; L-histidine biosynthesis; L-histidine from 5-phospho-alpha-D-ribose 1-diphosphate: step 4/9. In Bifidobacterium longum (strain DJO10A), this protein is 1-(5-phosphoribosyl)-5-[(5-phosphoribosylamino)methylideneamino] imidazole-4-carboxamide isomerase.